The sequence spans 400 residues: Acetate kinase (400 aa).

Asparagine 7 lines the Mg(2+) pocket. Residue lysine 14 coordinates ATP. A substrate-binding site is contributed by arginine 91. Residue aspartate 148 is the Proton donor/acceptor of the active site. ATP is bound by residues 208–212 (HVGNG), 283–285 (DMR), and 331–335 (GVGEN). Glutamate 385 is a Mg(2+) binding site.

It belongs to the acetokinase family. Homodimer. Requires Mg(2+) as cofactor. It depends on Mn(2+) as a cofactor.

The protein resides in the cytoplasm. It carries out the reaction acetate + ATP = acetyl phosphate + ADP. The protein operates within metabolic intermediate biosynthesis; acetyl-CoA biosynthesis; acetyl-CoA from acetate: step 1/2. Its function is as follows. Catalyzes the formation of acetyl phosphate from acetate and ATP. Can also catalyze the reverse reaction. This chain is Acetate kinase, found in Parabacteroides distasonis (strain ATCC 8503 / DSM 20701 / CIP 104284 / JCM 5825 / NCTC 11152).